A 476-amino-acid polypeptide reads, in one-letter code: Arginine biosynthesis bifunctional protein ArgJ, mitochondrial (476 aa).

Substrate-binding residues include threonine 193, lysine 219, threonine 237, glutamate 337, asparagine 471, and serine 476. The active-site Nucleophile is the threonine 237.

It belongs to the ArgJ family. As to quaternary structure, heterodimer of an alpha and a beta chain. In terms of processing, the alpha and beta chains are autoproteolytically processed from a single precursor protein within the mitochondrion.

It is found in the mitochondrion matrix. The enzyme catalyses N(2)-acetyl-L-ornithine + L-glutamate = N-acetyl-L-glutamate + L-ornithine. It catalyses the reaction L-glutamate + acetyl-CoA = N-acetyl-L-glutamate + CoA + H(+). Its pathway is amino-acid biosynthesis; L-arginine biosynthesis; L-ornithine and N-acetyl-L-glutamate from L-glutamate and N(2)-acetyl-L-ornithine (cyclic): step 1/1. The protein operates within amino-acid biosynthesis; L-arginine biosynthesis; N(2)-acetyl-L-ornithine from L-glutamate: step 1/4. Functionally, catalyzes two activities which are involved in the cyclic version of arginine biosynthesis: the synthesis of acetylglutamate from glutamate and acetyl-CoA, and of ornithine by transacetylation between acetylornithine and glutamate. The sequence is that of Arginine biosynthesis bifunctional protein ArgJ, mitochondrial from Cryptococcus neoformans var. neoformans serotype D (strain B-3501A) (Filobasidiella neoformans).